Consider the following 208-residue polypeptide: Protein GrpE (208 aa).

Over residues 1 to 12 the composition is skewed to basic and acidic residues; it reads MTNKDESVEKNT. The segment at 1–51 is disordered; that stretch reads MTNKDESVEKNTESTVEETNVKQNIDDSVEQAEESKGHLQDEAIEETSDEN. Over residues 13–23 the composition is skewed to polar residues; the sequence is ESTVEETNVKQ. The span at 42-51 shows a compositional bias: acidic residues; sequence EAIEETSDEN.

This sequence belongs to the GrpE family. As to quaternary structure, homodimer.

Its subcellular location is the cytoplasm. Participates actively in the response to hyperosmotic and heat shock by preventing the aggregation of stress-denatured proteins, in association with DnaK and GrpE. It is the nucleotide exchange factor for DnaK and may function as a thermosensor. Unfolded proteins bind initially to DnaJ; upon interaction with the DnaJ-bound protein, DnaK hydrolyzes its bound ATP, resulting in the formation of a stable complex. GrpE releases ADP from DnaK; ATP binding to DnaK triggers the release of the substrate protein, thus completing the reaction cycle. Several rounds of ATP-dependent interactions between DnaJ, DnaK and GrpE are required for fully efficient folding. The chain is Protein GrpE from Staphylococcus aureus (strain USA300).